A 180-amino-acid chain; its full sequence is Segregation and condensation protein B (180 aa).

This sequence belongs to the ScpB family. Homodimer. Homodimerization may be required to stabilize the binding of ScpA to the Smc head domains. Component of a cohesin-like complex composed of ScpA, ScpB and the Smc homodimer, in which ScpA and ScpB bind to the head domain of Smc. The presence of the three proteins is required for the association of the complex with DNA.

It localises to the cytoplasm. Participates in chromosomal partition during cell division. May act via the formation of a condensin-like complex containing Smc and ScpA that pull DNA away from mid-cell into both cell halves. The sequence is that of Segregation and condensation protein B from Staphylococcus aureus (strain MSSA476).